Here is a 1882-residue protein sequence, read N- to C-terminus: uncharacterized protein (1882 aa).

Residues 16–36 (FFLLFGIIFVLFSIIFLETSI) form a helical membrane-spanning segment. Disordered stretches follow at residues 103–129 (DFGS…DVND), 220–306 (FPGD…ESET), 492–513 (VALA…VKDP), and 658–698 (QTDE…TKST). The span at 221–239 (PGDKGKGEDKKTTKKKSEI) shows a compositional bias: basic and acidic residues. The segment covering 240-249 (KQASSATTVL) has biased composition (polar residues). Composition is skewed to basic and acidic residues over residues 259-275 (TDAK…KDSN), 284-294 (NKDKVWFKSDE), and 500-511 (DKQESSADDGVK). Positions 667 to 698 (AKTTQGTTDSLTQLADASSSSSSSSTGDTKST) are enriched in low complexity. 4 helical membrane-spanning segments follow: residues 987–1007 (ASVV…ILLI), 1037–1057 (VFAG…AFLL), 1080–1100 (WISF…ISWI), and 1154–1174 (LFTY…AGTI). 2 disordered regions span residues 1233 to 1253 (DQIQ…EHPY) and 1572 to 1598 (KDGQ…TSST). The span at 1234–1245 (QIQQQQQQQQQQ) shows a compositional bias: low complexity. Residues 1583 to 1594 (TSSGGGSCGGGS) are compositionally biased toward gly residues. A run of 4 helical transmembrane segments spans residues 1759 to 1779 (FLLG…GISM), 1807 to 1827 (FFIP…AGLL), 1828 to 1848 (VGVQ…VFEF), and 1851 to 1871 (YMVG…YFWI).

This sequence belongs to the ABC-4 integral membrane protein family.

It is found in the cell membrane. This is an uncharacterized protein from Mycoplasma pneumoniae (strain ATCC 29342 / M129 / Subtype 1) (Mycoplasmoides pneumoniae).